Consider the following 1077-residue polypeptide: Endo-1,4-beta-xylanase Y (1077 aa).

Residues 1 to 26 (MKNKRVLAKITALVVLLGVFFVLPSN) form the signal peptide. The CBM-cenC 1 domain occupies 33–180 (DYEVVHDTFE…IFDDVTITRK (148 aa)). The 350-residue stretch at 189-538 (YAANAVLKDM…KPAYNAVASI (350 aa)) folds into the GH10 domain. E337 functions as the Proton donor in the catalytic mechanism. The active-site Nucleophile is E460. Residues 543–563 (EWGDGNNPAGGGGGGKPEEPD) are disordered. One can recognise a CBM-cenC 2 domain in the interval 565-714 (NGYYYHDTFE…YIDEAIGAVA (150 aa)). The 69-residue stretch at 728–796 (PPVLLGDVNG…LLRVIDKFPV (69 aa)) folds into the Dockerin domain.

Belongs to the glycosyl hydrolase 10 (cellulase F) family.

It carries out the reaction Endohydrolysis of (1-&gt;4)-beta-D-xylosidic linkages in xylans.. This chain is Endo-1,4-beta-xylanase Y (xynY), found in Acetivibrio thermocellus (Hungateiclostridium thermocellum).